The primary structure comprises 605 residues: DNA mismatch repair protein MutL (605 aa).

It belongs to the DNA mismatch repair MutL/HexB family.

This protein is involved in the repair of mismatches in DNA. It is required for dam-dependent methyl-directed DNA mismatch repair. May act as a 'molecular matchmaker', a protein that promotes the formation of a stable complex between two or more DNA-binding proteins in an ATP-dependent manner without itself being part of a final effector complex. This chain is DNA mismatch repair protein MutL, found in Sinorhizobium medicae (strain WSM419) (Ensifer medicae).